Here is a 358-residue protein sequence, read N- to C-terminus: Endoplasmic reticulum junction formation protein lunapark-B (358 aa).

Residues 1 to 45 (MGAIISRWKTKLTTVEQLENIDKEIKQLEEFRAKNQRLQKLWVGR) lie on the Cytoplasmic side of the membrane. A coiled-coil region spans residues 9–41 (KTKLTTVEQLENIDKEIKQLEEFRAKNQRLQKL). Residues 46 to 66 (LLLYSSALYLLISLFVYLLYL) traverse the membrane as a helical segment. Residues 67-69 (PEQ) are Lumenal-facing. A helical membrane pass occupies residues 70-90 (WLLRLAMALPFFIYPVLVWFI). Residues 91–358 (RRFLIFLFSK…SRGMDKHGRA (268 aa)) lie on the Cytoplasmic side of the membrane. Positions 99–128 (SKRSERNNDKLEDLKATKKKILEEVMETET) form a coiled coil. Residues 275 to 300 (CQQCFSHNGMALKEEFEYLAFRCAYC) form a C4-type; plays a role in ER morphology zinc finger. Positions 320 to 358 (NFEKRLRAESSTPGPAPHSATDTEESAPPSRGMDKHGRA) are disordered.

Belongs to the lunapark family. In terms of assembly, homodimer; homodimerization requires the C4-type zinc finger motif and decreases during mitosis in a phosphorylation-dependent manner. In terms of processing, phosphorylated. Phosphorylation occurs during interphase. Phosphorylation also occurs during mitosis; these phosphorylations reduce both its homodimerization and the ER three-way tubular junction formation.

It is found in the endoplasmic reticulum membrane. Its function is as follows. Endoplasmic reticulum (ER)-shaping membrane protein that plays a role in determining ER morphology. Involved in the stabilization of nascent three-way ER tubular junctions within the ER network. May also play a role as a curvature-stabilizing protein within three-way ER tubular junction network. This Takifugu rubripes (Japanese pufferfish) protein is Endoplasmic reticulum junction formation protein lunapark-B (lnpkb).